Consider the following 291-residue polypeptide: Beta-lactamase CTX-M-15 (291 aa).

The N-terminal stretch at 1–28 (MVKKSLRQFTLMATATVTLLLGSVPLYA) is a signal peptide. S73 functions as the Nucleophile; acyl-ester intermediate in the catalytic mechanism. Residues K76, S133, E169, and S240 each contribute to the a beta-lactam site.

This sequence belongs to the class-A beta-lactamase family. Monomer.

It is found in the secreted. The enzyme catalyses a beta-lactam + H2O = a substituted beta-amino acid. Its activity is regulated as follows. Inhibited by the beta-lactamase-blocking agents clavulanic acid and avibactam, via a covalent binding to Ser-73. In terms of biological role, extended-spectrum beta-lactamase (ESBL) which confers resistance to penicillins, as well as first, second, third and fourth-generation cephalosporins. Has cefotaxime- and ceftazidime-hydrolyzing activity. Inactive against the carbapenem antibiotics, imipenem, meropenem and ertapenem. The chain is Beta-lactamase CTX-M-15 from Escherichia coli O25b:H4.